The sequence spans 138 residues: ATP synthase epsilon chain (138 aa).

This sequence belongs to the ATPase epsilon chain family. F-type ATPases have 2 components, CF(1) - the catalytic core - and CF(0) - the membrane proton channel. CF(1) has five subunits: alpha(3), beta(3), gamma(1), delta(1), epsilon(1). CF(0) has three main subunits: a, b and c.

Its subcellular location is the cell inner membrane. Functionally, produces ATP from ADP in the presence of a proton gradient across the membrane. In Verminephrobacter eiseniae (strain EF01-2), this protein is ATP synthase epsilon chain.